We begin with the raw amino-acid sequence, 219 residues long: 2-hydroxy-3-keto-5-methylthiopentenyl-1-phosphate phosphatase (219 aa).

Belongs to the HAD-like hydrolase superfamily. MtnX family.

The catalysed reaction is 2-hydroxy-5-methylsulfanyl-3-oxopent-1-enyl phosphate + H2O = 1,2-dihydroxy-5-(methylsulfanyl)pent-1-en-3-one + phosphate. It functions in the pathway amino-acid biosynthesis; L-methionine biosynthesis via salvage pathway; L-methionine from S-methyl-5-thio-alpha-D-ribose 1-phosphate: step 4/6. In terms of biological role, dephosphorylates 2-hydroxy-3-keto-5-methylthiopentenyl-1-phosphate (HK-MTPenyl-1-P) yielding 1,2-dihydroxy-3-keto-5-methylthiopentene (DHK-MTPene). The sequence is that of 2-hydroxy-3-keto-5-methylthiopentenyl-1-phosphate phosphatase from Bacillus anthracis (strain A0248).